A 237-amino-acid polypeptide reads, in one-letter code: 1-(5-phosphoribosyl)-5-[(5-phosphoribosylamino)methylideneamino] imidazole-4-carboxamide isomerase (237 aa).

Asp-8 (proton acceptor) is an active-site residue. The active-site Proton donor is Asp-129.

Belongs to the HisA/HisF family.

The protein localises to the cytoplasm. It catalyses the reaction 1-(5-phospho-beta-D-ribosyl)-5-[(5-phospho-beta-D-ribosylamino)methylideneamino]imidazole-4-carboxamide = 5-[(5-phospho-1-deoxy-D-ribulos-1-ylimino)methylamino]-1-(5-phospho-beta-D-ribosyl)imidazole-4-carboxamide. The protein operates within amino-acid biosynthesis; L-histidine biosynthesis; L-histidine from 5-phospho-alpha-D-ribose 1-diphosphate: step 4/9. This chain is 1-(5-phosphoribosyl)-5-[(5-phosphoribosylamino)methylideneamino] imidazole-4-carboxamide isomerase, found in Acetivibrio thermocellus (strain ATCC 27405 / DSM 1237 / JCM 9322 / NBRC 103400 / NCIMB 10682 / NRRL B-4536 / VPI 7372) (Clostridium thermocellum).